A 1070-amino-acid chain; its full sequence is DNA-directed RNA polymerase subunit beta (1070 aa).

It belongs to the RNA polymerase beta chain family. In terms of assembly, in plastids the minimal PEP RNA polymerase catalytic core is composed of four subunits: alpha, beta, beta', and beta''. When a (nuclear-encoded) sigma factor is associated with the core the holoenzyme is formed, which can initiate transcription.

It localises to the plastid. The protein resides in the chloroplast. It catalyses the reaction RNA(n) + a ribonucleoside 5'-triphosphate = RNA(n+1) + diphosphate. DNA-dependent RNA polymerase catalyzes the transcription of DNA into RNA using the four ribonucleoside triphosphates as substrates. The chain is DNA-directed RNA polymerase subunit beta from Populus trichocarpa (Western balsam poplar).